A 213-amino-acid polypeptide reads, in one-letter code: Kiwellin (213 aa).

Residues 1–24 form the signal peptide; it reads MAQLALLLLSLFLTLISLAPPGAS. 3 cysteine pairs are disulfide-bonded: cysteine 28–cysteine 60, cysteine 32–cysteine 44, and cysteine 38–cysteine 49. 4-hydroxyproline occurs at positions 65 and 67. Intrachain disulfides connect cysteine 72–cysteine 90, cysteine 80–cysteine 172, cysteine 119–cysteine 144, and cysteine 166–cysteine 172. Positions 91 to 121 are disordered; it reads SPPVTSSTPAKLTNNDFSEGGDDGGPSECDE. The segment covering 93–107 has biased composition (polar residues); sequence PVTSSTPAKLTNNDF.

The protein belongs to the kiwellin family. Post-translationally, undergoes proteolytic cleavage by actinidin to produce kissper and KiTH. Three forms of KiTH are produced by cleavage at different sites, the main form produced in vivo is KiTH-1.

The protein localises to the secreted. In terms of biological role, pH-dependent, voltage-gated and anion-selective pore-forming peptide. This chain is Kiwellin, found in Actinidia deliciosa (Kiwi).